A 197-amino-acid polypeptide reads, in one-letter code: Proteasome subunit beta 1 (197 aa).

Residues 1–6 (MNRKTG) constitute a propeptide, removed in mature form; by autocatalysis. T7 functions as the Nucleophile in the catalytic mechanism.

It belongs to the peptidase T1B family. In terms of assembly, the 20S proteasome core is composed of 14 alpha and 14 beta subunits that assemble into four stacked heptameric rings, resulting in a barrel-shaped structure. The two inner rings, each composed of seven catalytic beta subunits, are sandwiched by two outer rings, each composed of seven alpha subunits. The catalytic chamber with the active sites is on the inside of the barrel. Has a gated structure, the ends of the cylinder being occluded by the N-termini of the alpha-subunits. Is capped at one or both ends by the proteasome regulatory ATPase, PAN.

Its subcellular location is the cytoplasm. It carries out the reaction Cleavage of peptide bonds with very broad specificity.. The formation of the proteasomal ATPase PAN-20S proteasome complex, via the docking of the C-termini of PAN into the intersubunit pockets in the alpha-rings, triggers opening of the gate for substrate entry. Interconversion between the open-gate and close-gate conformations leads to a dynamic regulation of the 20S proteasome proteolysis activity. Functionally, component of the proteasome core, a large protease complex with broad specificity involved in protein degradation. The polypeptide is Proteasome subunit beta 1 (Pyrococcus abyssi (strain GE5 / Orsay)).